Consider the following 283-residue polypeptide: Methyltransferase cpsF (283 aa).

This sequence belongs to the methyltransferase superfamily. LaeA methyltransferase family.

The enzyme catalyses campesine A + S-adenosyl-L-methionine = campesine B + S-adenosyl-L-homocysteine + H(+). The protein operates within alkaloid biosynthesis. Methyltransferase; part of the gene cluster that mediates the biosynthesis of campesine G, a dimeric indole piperazine alkaloid that shows good insecticidal activity Galleria mellonella. Within the pathway, cpsF methylates campesine A at N13 of piperazine ring to produce campesine B. The non-canonical non-ribosomal peptide synthetase cpsA catalyzes the first steps of the pathway by producing L-tryptophanal and L-valinal from their respective amino-acids. These products condensate spontaneously to form trypyl-valyl pyrazine also known as didehydrocampesine A. The NmrA-like family domain-containing oxidoreductase cpsB is the next enzyme in cps pathway and reduces the unstable didehydrocampesine A to campesine A. The methyltransferase cpsF and the acetyltransferase cpsE both recognize N13 of piperazine ring to carry out methylation and acetylation of campesine A to produce campesine C and B, respectively. The cytochrome P450 monooxygenase cpsD then acts as a dimerase that catalyzes oxidative heterocoupling between campesine B and C to produce heterodimers with unexpected 6/5/6/6/6/6/5/6 eight-ring scaffold called campesine D. Finally,the cytochrome P450 monooxygenase cpsC is a regioselective dehydrogenase that catalyzes dehydrogenation reaction towards C2-N1 to produce campesine G. The protein is Methyltransferase cpsF of Aspergillus campestris (strain IBT 28561).